Reading from the N-terminus, the 551-residue chain is Hydroxylamine reductase (551 aa).

[2Fe-2S] cluster-binding residues include cysteine 3, cysteine 6, cysteine 18, and cysteine 25. 8 residues coordinate hybrid [4Fe-2O-2S] cluster: histidine 249, glutamate 273, cysteine 317, cysteine 405, cysteine 433, cysteine 459, glutamate 493, and lysine 495. Position 405 is a cysteine persulfide (cysteine 405).

It belongs to the HCP family. [2Fe-2S] cluster is required as a cofactor. Requires hybrid [4Fe-2O-2S] cluster as cofactor.

It localises to the cytoplasm. The enzyme catalyses A + NH4(+) + H2O = hydroxylamine + AH2 + H(+). In terms of biological role, catalyzes the reduction of hydroxylamine to form NH(3) and H(2)O. The sequence is that of Hydroxylamine reductase from Actinobacillus pleuropneumoniae serotype 7 (strain AP76).